Reading from the N-terminus, the 355-residue chain is Phenylalanine--tRNA ligase alpha subunit (355 aa).

Glutamate 273 contacts Mg(2+).

It belongs to the class-II aminoacyl-tRNA synthetase family. Phe-tRNA synthetase alpha subunit type 1 subfamily. In terms of assembly, tetramer of two alpha and two beta subunits. Mg(2+) serves as cofactor.

It localises to the cytoplasm. The catalysed reaction is tRNA(Phe) + L-phenylalanine + ATP = L-phenylalanyl-tRNA(Phe) + AMP + diphosphate + H(+). This Bifidobacterium animalis subsp. lactis (strain AD011) protein is Phenylalanine--tRNA ligase alpha subunit.